A 502-amino-acid polypeptide reads, in one-letter code: Glycerol kinase (502 aa).

Thr-14 contributes to the ADP binding site. Thr-14, Thr-15, and Ser-16 together coordinate ATP. Residue Thr-14 coordinates sn-glycerol 3-phosphate. Arg-18 contacts ADP. Sn-glycerol 3-phosphate-binding residues include Arg-84, Glu-85, Tyr-136, and Asp-246. Glycerol-binding residues include Arg-84, Glu-85, Tyr-136, Asp-246, and Gln-247. 2 residues coordinate ADP: Thr-268 and Gly-311. Positions 268, 311, 315, and 412 each coordinate ATP. ADP contacts are provided by Gly-412 and Asn-416.

This sequence belongs to the FGGY kinase family. Homotetramer and homodimer (in equilibrium). Heterodimer with EIIA-Glc. Binds 1 zinc ion per glycerol kinase EIIA-Glc dimer. The zinc ion is important for dimerization.

The catalysed reaction is glycerol + ATP = sn-glycerol 3-phosphate + ADP + H(+). Its pathway is polyol metabolism; glycerol degradation via glycerol kinase pathway; sn-glycerol 3-phosphate from glycerol: step 1/1. Its activity is regulated as follows. Activity of this regulatory enzyme is affected by several metabolites. Allosterically and non-competitively inhibited by fructose 1,6-bisphosphate (FBP) and unphosphorylated phosphocarrier protein EIIA-Glc (III-Glc), an integral component of the bacterial phosphotransferase (PTS) system. In terms of biological role, key enzyme in the regulation of glycerol uptake and metabolism. Catalyzes the phosphorylation of glycerol to yield sn-glycerol 3-phosphate. This Escherichia coli O8 (strain IAI1) protein is Glycerol kinase.